An 88-amino-acid chain; its full sequence is DASH complex subunit HSK3 (88 aa).

The span at 1–15 (MSSRGSGANAASRQS) shows a compositional bias: low complexity. Residues 1–24 (MSSRGSGANAASRQSMTASGGAVK) are disordered.

Belongs to the DASH complex HSK3 family. Component of the DASH complex consisting of ASK1, DAD1, DAD2, DAD3, DAD4, DAM1, DUO1, HSK3, SPC19 and SPC34, with a stoichiometry of one copy of each subunit per complex. Multiple DASH complexes oligomerize to form a ring that encircles spindle microtubules and organizes the rod-like NDC80 complexes of the outer kinetochore. DASH complex oligomerization strengthens microtubule attachments. On cytoplasmic microtubules, DASH complexes appear to form patches instead of rings.

The protein localises to the nucleus. Its subcellular location is the cytoplasm. It localises to the cytoskeleton. It is found in the spindle. The protein resides in the chromosome. The protein localises to the centromere. Its subcellular location is the kinetochore. Its function is as follows. Component of the DASH complex that connects microtubules with kinetochores and couples microtubule depolymerisation to chromosome movement; it is involved in retrieving kinetochores to the spindle poles before their re-orientation on the spindle in early mitosis and allows microtubule depolymerization to pull chromosomes apart and resist detachment during anaphase. Kinetochores, consisting of a centromere-associated inner segment and a microtubule-contacting outer segment, play a crucial role in chromosome segregation by mediating the physical connection between centromeric DNA and microtubules. Kinetochores also serve as an input point for the spindle assembly checkpoint, which delays anaphase until all chromosomes have bioriented on the mitotic spindle. This chain is DASH complex subunit HSK3, found in Chaetomium thermophilum (strain DSM 1495 / CBS 144.50 / IMI 039719) (Thermochaetoides thermophila).